A 126-amino-acid polypeptide reads, in one-letter code: Aspartate 1-decarboxylase (126 aa).

Ser25 acts as the Schiff-base intermediate with substrate; via pyruvic acid in catalysis. Position 25 is a pyruvic acid (Ser) (Ser25). Thr57 provides a ligand contact to substrate. Tyr58 acts as the Proton donor in catalysis. Gly73 to Ala75 contacts substrate.

This sequence belongs to the PanD family. In terms of assembly, heterooctamer of four alpha and four beta subunits. Requires pyruvate as cofactor. In terms of processing, is synthesized initially as an inactive proenzyme, which is activated by self-cleavage at a specific serine bond to produce a beta-subunit with a hydroxyl group at its C-terminus and an alpha-subunit with a pyruvoyl group at its N-terminus.

It is found in the cytoplasm. It carries out the reaction L-aspartate + H(+) = beta-alanine + CO2. Its pathway is cofactor biosynthesis; (R)-pantothenate biosynthesis; beta-alanine from L-aspartate: step 1/1. In terms of biological role, catalyzes the pyruvoyl-dependent decarboxylation of aspartate to produce beta-alanine. The chain is Aspartate 1-decarboxylase from Acinetobacter baumannii (strain ACICU).